Consider the following 104-residue polypeptide: Large ribosomal subunit protein uL24 (104 aa).

Belongs to the universal ribosomal protein uL24 family. Part of the 50S ribosomal subunit.

Functionally, one of two assembly initiator proteins, it binds directly to the 5'-end of the 23S rRNA, where it nucleates assembly of the 50S subunit. In terms of biological role, one of the proteins that surrounds the polypeptide exit tunnel on the outside of the subunit. The polypeptide is Large ribosomal subunit protein uL24 (Afipia carboxidovorans (strain ATCC 49405 / DSM 1227 / KCTC 32145 / OM5) (Oligotropha carboxidovorans)).